A 237-amino-acid chain; its full sequence is Phosphoribosylaminoimidazole-succinocarboxamide synthase (237 aa).

Belongs to the SAICAR synthetase family.

It carries out the reaction 5-amino-1-(5-phospho-D-ribosyl)imidazole-4-carboxylate + L-aspartate + ATP = (2S)-2-[5-amino-1-(5-phospho-beta-D-ribosyl)imidazole-4-carboxamido]succinate + ADP + phosphate + 2 H(+). The protein operates within purine metabolism; IMP biosynthesis via de novo pathway; 5-amino-1-(5-phospho-D-ribosyl)imidazole-4-carboxamide from 5-amino-1-(5-phospho-D-ribosyl)imidazole-4-carboxylate: step 1/2. This Sodalis glossinidius (strain morsitans) protein is Phosphoribosylaminoimidazole-succinocarboxamide synthase.